A 719-amino-acid polypeptide reads, in one-letter code: Solute carrier organic anion transporter family member 6A1 (719 aa).

Residues 1 to 46 are disordered; that stretch reads MFVGVARHSGSQDEVSRGVEPLEAARAQPAKDRRAKGTPKSSKPGK. Over 1–106 the chain is Cytoplasmic; it reads MFVGVARHSG…TCCECCNNIR (106 aa). Over residues 33–46 the composition is skewed to basic residues; it reads RRAKGTPKSSKPGK. Residues 107 to 126 form a helical membrane-spanning segment; it reads CFMIFYCILLICQGVVFGLI. The Extracellular segment spans residues 127–145; sequence DVSIGDFQKEYQLKTIEKL. A helical membrane pass occupies residues 146–166; that stretch reads ALEKSYDISSGLVAIFIAFYG. Residues 167-171 are Cytoplasmic-facing; that stretch reads DRKKV. Residues 172 to 196 form a helical membrane-spanning segment; it reads IWFVASSFLIGLGSLLCAFPSINEE. Residues 197–223 lie on the Extracellular side of the membrane; that stretch reads NKQSKVGIEDICEEIKVVSGCQSSGIS. A helical transmembrane segment spans residues 224–254; the sequence is FQSKYLSFFILGQTVQGIAGMPLYILGITFI. At 255-274 the chain is on the cytoplasmic side; the sequence is DENVATHSAGIYLGIAECTS. The helical transmembrane segment at 275–295 threads the bilayer; it reads MIGYALGYVLGAPLVKVPENT. The Extracellular portion of the chain corresponds to 296–311; it reads TSATNTTVNNGSPEWL. Asn-300 carries an N-linked (GlcNAc...) asparagine glycan. Residues 312–336 traverse the membrane as a helical segment; sequence WTWWINFLFAAVVAWCTLIPLSCFP. At 337–378 the chain is on the cytoplasmic side; the sequence is NNMPGSTRIKARKRKQLHFFDSRLKDLKLGTNIKDLCAALWI. A helical transmembrane segment spans residues 379–400; that stretch reads LMKNPVLICLALSKATEYLVII. At 401–420 the chain is on the extracellular side; the sequence is GASEFLPIYLENQFILTPTV. The chain crosses the membrane as a helical span at residues 421-444; it reads ATTLAGLVLIPGGALGQLLGGVIV. Residues 445–448 are Cytoplasmic-facing; that stretch reads STLE. The helical transmembrane segment at 449–472 threads the bilayer; the sequence is MSCKALMRFIMVTSVISLILLVFI. Residues 473–581 lie on the Extracellular side of the membrane; sequence IFVRCNPVQF…DAKCYKLPLF (109 aa). The Kazal-like domain maps to 496–551; the sequence is GNLTAPCNEKCRCSSSIYSSICGRDDIEYFSPCFAGCTYSKAQNQKKMYYNCSCIK. A glycan (N-linked (GlcNAc...) asparagine) is linked at Asn-497. Disulfide bonds link Cys-502/Cys-532, Cys-508/Cys-528, and Cys-517/Cys-549. Asn-546 carries an N-linked (GlcNAc...) asparagine glycan. Residues 582–604 traverse the membrane as a helical segment; sequence IAFIFSTLIFSGFSGVPIVLAMT. At 605–613 the chain is on the cytoplasmic side; that stretch reads RVVPDKLRS. A helical transmembrane segment spans residues 614–639; that stretch reads LALGVSYVILRIFGTIPGPSIFKMSG. Residues 640-673 lie on the Extracellular side of the membrane; sequence ETSCILRDVNKCGHTGRCWIYNKTKMAFLLVGIC. Asn-661 carries an N-linked (GlcNAc...) asparagine glycan. A helical transmembrane segment spans residues 674-691; it reads FLCKLCTIIFTTIAFFIY. The Cytoplasmic portion of the chain corresponds to 692–719; it reads KRRLNENTDFPDVTVKNPKVKKKEETDL.

It belongs to the organo anion transporter (TC 2.A.60) family. Strongly expressed in testis. Weakly expressed in spleen, brain, fetal brain and placenta. Detected in lung tumors.

Its subcellular location is the cell membrane. The protein is Solute carrier organic anion transporter family member 6A1 (SLCO6A1) of Homo sapiens (Human).